A 272-amino-acid chain; its full sequence is 1,4-dihydroxy-2-naphthoyl-CoA synthase (272 aa).

Substrate contacts are provided by residues R33, 72–76 (SGGDQ), Y84, 116–120 (YAIGG), T142, S148, Y245, and K260. 141-143 (QTG) contacts hydrogencarbonate. Basic and acidic residues predominate over residues 253–264 (GRDAFKEKRDPD). Positions 253–272 (GRDAFKEKRDPDFDQFPKFP) are disordered.

The protein belongs to the enoyl-CoA hydratase/isomerase family. MenB subfamily. Hydrogencarbonate serves as cofactor.

It catalyses the reaction 2-succinylbenzoyl-CoA + H(+) = 1,4-dihydroxy-2-naphthoyl-CoA + H2O. It functions in the pathway quinol/quinone metabolism; 1,4-dihydroxy-2-naphthoate biosynthesis; 1,4-dihydroxy-2-naphthoate from chorismate: step 6/7. It participates in quinol/quinone metabolism; menaquinone biosynthesis. Its function is as follows. Converts o-succinylbenzoyl-CoA (OSB-CoA) to 1,4-dihydroxy-2-naphthoyl-CoA (DHNA-CoA). This is 1,4-dihydroxy-2-naphthoyl-CoA synthase from Staphylococcus saprophyticus subsp. saprophyticus (strain ATCC 15305 / DSM 20229 / NCIMB 8711 / NCTC 7292 / S-41).